The primary structure comprises 368 residues: Probable dual-specificity RNA methyltransferase RlmN (368 aa).

The Proton acceptor role is filled by Glu100. A Radical SAM core domain is found at 106–344 (QHYGLSVCVT…CVVRQEHGTD (239 aa)). Cys113 and Cys349 form a disulfide bridge. Positions 120, 124, and 127 each coordinate [4Fe-4S] cluster. S-adenosyl-L-methionine-binding positions include 172–173 (GE), Ser204, 227–229 (SLH), and Asn305. Catalysis depends on Cys349, which acts as the S-methylcysteine intermediate.

Belongs to the radical SAM superfamily. RlmN family. [4Fe-4S] cluster serves as cofactor.

It is found in the cytoplasm. It carries out the reaction adenosine(2503) in 23S rRNA + 2 reduced [2Fe-2S]-[ferredoxin] + 2 S-adenosyl-L-methionine = 2-methyladenosine(2503) in 23S rRNA + 5'-deoxyadenosine + L-methionine + 2 oxidized [2Fe-2S]-[ferredoxin] + S-adenosyl-L-homocysteine. It catalyses the reaction adenosine(37) in tRNA + 2 reduced [2Fe-2S]-[ferredoxin] + 2 S-adenosyl-L-methionine = 2-methyladenosine(37) in tRNA + 5'-deoxyadenosine + L-methionine + 2 oxidized [2Fe-2S]-[ferredoxin] + S-adenosyl-L-homocysteine. Functionally, specifically methylates position 2 of adenine 2503 in 23S rRNA and position 2 of adenine 37 in tRNAs. The chain is Probable dual-specificity RNA methyltransferase RlmN from Streptococcus agalactiae serotype V (strain ATCC BAA-611 / 2603 V/R).